Reading from the N-terminus, the 130-residue chain is Movement protein TGB2 (130 aa).

Over 1-12 (MPGLTPPVNYEQ) the chain is Cytoplasmic. The helical transmembrane segment at 13-30 (VYKVLAIGFLLCASIYCL) threads the bilayer. The Lumenal segment spans residues 31 to 72 (RSNHLPHVGDNIHSLPHGGNYADGTKRVQYFRPHSSTSTNHK). A helical transmembrane segment spans residues 73–90 (YTALCAVLTLSLLIFAQT). Residues 91 to 130 (RLAAGNRITSVSICHHCSSQGSLSGGNHGRVSGHSELPTT) are Cytoplasmic-facing. A disordered region spans residues 110-130 (QGSLSGGNHGRVSGHSELPTT).

The protein belongs to the Tymovirales TGBp2 protein family.

Its subcellular location is the host endoplasmic reticulum membrane. Plays a role in viral cell-to-cell propagation, by facilitating genome transport to neighboring plant cells through plasmosdesmata,. This chain is Movement protein TGB2, found in Narcissus pseudonarcissus (Daffodil).